The primary structure comprises 342 residues: Trace amine-associated receptor 3 (342 aa).

Residues 1–35 (MDLIYIPEDLSSCPKFGNKSCPPTNRSFRVRLIMY) are Extracellular-facing. N-linked (GlcNAc...) asparagine glycosylation is found at Asn18 and Asn25. Intrachain disulfides connect Cys21–Cys185 and Cys104–Cys189. Residues 36-56 (LLMTGAMVITIFGNLVIIISI) form a helical membrane-spanning segment. Residues 57–68 (SHFKQLHSPTNF) lie on the Cytoplasmic side of the membrane. A helical transmembrane segment spans residues 69-89 (LILSMATTDFLLGFVIMPYSM). Residues 90-150 (VRSVESCWYF…TTMTASMIKR (61 aa)) lie on the Extracellular side of the membrane. The helical transmembrane segment at 151-168 (LLFFCWAAPALFSFGLVL) threads the bilayer. Topologically, residues 169 to 172 (SEAN) are cytoplasmic. The segment at 173–186 (VSGMQSYEILIACF) is extracellular Loop 2 (ECL2). A helical membrane pass occupies residues 173-193 (VSGMQSYEILIACFNFCALTF). Topologically, residues 194 to 198 (NKFWG) are extracellular. The helical transmembrane segment at 199–223 (TILFTTCFFTPGSIMVGIYGKIFIV) threads the bilayer. Residues 224 to 256 (SRRHARALGNMPENTKGAGRNLSKKKDRKAAKT) lie on the Cytoplasmic side of the membrane. Residues 257–277 (LGIVMGVFLACWLPCFLAVLI) traverse the membrane as a helical segment. The Extracellular portion of the chain corresponds to 278-286 (DPYLDYSTP). Residues 287 to 307 (IIVLDLLVWLGYFNSTCNPLI) form a helical membrane-spanning segment. The Cytoplasmic segment spans residues 308-342 (HGFFYPWFRKALEHIVSGKIFRSNSDTANLFPEAH).

It belongs to the G-protein coupled receptor 1 family.

It localises to the cell membrane. Functionally, olfactory receptor activated by several primary trace amines, including isoamylamine. Activated by isoamylamine and cyclohexylamine, but not to the corresponding alcohols, isoamylalcohol and cyclohexanol. This receptor is probably mediated by the G(s)-class of G-proteins which activate adenylate cyclase. In Rattus norvegicus (Rat), this protein is Trace amine-associated receptor 3 (Taar3).